A 477-amino-acid chain; its full sequence is Proline--tRNA ligase (477 aa).

The protein belongs to the class-II aminoacyl-tRNA synthetase family. ProS type 3 subfamily. Homodimer.

It localises to the cytoplasm. The catalysed reaction is tRNA(Pro) + L-proline + ATP = L-prolyl-tRNA(Pro) + AMP + diphosphate. Catalyzes the attachment of proline to tRNA(Pro) in a two-step reaction: proline is first activated by ATP to form Pro-AMP and then transferred to the acceptor end of tRNA(Pro). This chain is Proline--tRNA ligase, found in Lachnoclostridium phytofermentans (strain ATCC 700394 / DSM 18823 / ISDg) (Clostridium phytofermentans).